The following is a 207-amino-acid chain: Ribosomal RNA small subunit methyltransferase G (207 aa).

S-adenosyl-L-methionine-binding positions include G76, Q81, 127-128, and R141; that span reads VE.

The protein belongs to the methyltransferase superfamily. RNA methyltransferase RsmG family.

It is found in the cytoplasm. It carries out the reaction guanosine(527) in 16S rRNA + S-adenosyl-L-methionine = N(7)-methylguanosine(527) in 16S rRNA + S-adenosyl-L-homocysteine. Functionally, specifically methylates the N7 position of guanine in position 527 of 16S rRNA. This Neisseria meningitidis serogroup A / serotype 4A (strain DSM 15465 / Z2491) protein is Ribosomal RNA small subunit methyltransferase G.